The sequence spans 316 residues: Ribosomal RNA small subunit methyltransferase H (316 aa).

S-adenosyl-L-methionine contacts are provided by residues A35–H37, D55, F84, D105, and Q112.

This sequence belongs to the methyltransferase superfamily. RsmH family.

It is found in the cytoplasm. The catalysed reaction is cytidine(1402) in 16S rRNA + S-adenosyl-L-methionine = N(4)-methylcytidine(1402) in 16S rRNA + S-adenosyl-L-homocysteine + H(+). In terms of biological role, specifically methylates the N4 position of cytidine in position 1402 (C1402) of 16S rRNA. The protein is Ribosomal RNA small subunit methyltransferase H of Streptococcus pneumoniae (strain Taiwan19F-14).